Consider the following 431-residue polypeptide: Histidinol dehydrogenase 1 (431 aa).

The NAD(+) site is built by Y127, Q188, and N211. Residues S234, Q256, and H259 each contribute to the substrate site. 2 residues coordinate Zn(2+): Q256 and H259. Residues E324 and H325 each act as proton acceptor in the active site. Residues H325, D358, E412, and H417 each contribute to the substrate site. D358 serves as a coordination point for Zn(2+). Residue H417 coordinates Zn(2+).

Belongs to the histidinol dehydrogenase family. It depends on Zn(2+) as a cofactor.

It carries out the reaction L-histidinol + 2 NAD(+) + H2O = L-histidine + 2 NADH + 3 H(+). The protein operates within amino-acid biosynthesis; L-histidine biosynthesis; L-histidine from 5-phospho-alpha-D-ribose 1-diphosphate: step 9/9. Catalyzes the sequential NAD-dependent oxidations of L-histidinol to L-histidinaldehyde and then to L-histidine. The sequence is that of Histidinol dehydrogenase 1 (hisD1) from Nostoc sp. (strain PCC 7120 / SAG 25.82 / UTEX 2576).